Consider the following 310-residue polypeptide: Porphobilinogen deaminase (310 aa).

An S-(dipyrrolylmethanemethyl)cysteine modification is found at Cys242.

This sequence belongs to the HMBS family. As to quaternary structure, monomer. Requires dipyrromethane as cofactor.

It carries out the reaction 4 porphobilinogen + H2O = hydroxymethylbilane + 4 NH4(+). It functions in the pathway porphyrin-containing compound metabolism; protoporphyrin-IX biosynthesis; coproporphyrinogen-III from 5-aminolevulinate: step 2/4. In terms of biological role, tetrapolymerization of the monopyrrole PBG into the hydroxymethylbilane pre-uroporphyrinogen in several discrete steps. The polypeptide is Porphobilinogen deaminase (Halorhodospira halophila (strain DSM 244 / SL1) (Ectothiorhodospira halophila (strain DSM 244 / SL1))).